Consider the following 337-residue polypeptide: Cytoskeleton protein RodZ (337 aa).

At 1-111 the chain is on the cytoplasmic side; sequence MNTEATHDQN…LGKRRKKRDG (111 aa). The region spanning 19-71 is the HTH cro/C1-type domain; it reads LRNAREQLGLSQQAVAERLCLKVSTVRDIEEDKAPADLASTFLRGYIRSYARL. Residues 30-49 constitute a DNA-binding region (H-T-H motif); sequence QQAVAERLCLKVSTVRDIEE. The helical; Signal-anchor for type II membrane protein transmembrane segment at 112 to 132 threads the bilayer; it reads WLMTFTWLVLFVVIGLSGAWW. Residues 133 to 337 lie on the Periplasmic side of the membrane; sequence WQDHKAQQEE…TLNAEQSPAQ (205 aa). Residues 145 to 167 show a composition bias toward polar residues; that stretch reads TMADQSSAELSSNSEQGQSVPLN. The disordered stretch occupies residues 145–235; that stretch reads TMADQSSAEL…PTAATTPDGA (91 aa). The span at 168 to 207 shows a compositional bias: low complexity; it reads TSTTTDPATTSTPPASVDTTATNTQTPAVTAPAPAVDPQQ. The span at 208-218 shows a compositional bias: polar residues; it reads NAVVSPSQANV. The span at 219 to 235 shows a compositional bias: low complexity; the sequence is DTAATPAPTAATTPDGA.

It belongs to the RodZ family.

Its subcellular location is the cell inner membrane. In terms of biological role, cytoskeletal protein that is involved in cell-shape control through regulation of the length of the long axis. This chain is Cytoskeleton protein RodZ, found in Shigella boydii serotype 4 (strain Sb227).